The sequence spans 880 residues: Alanine--tRNA ligase (880 aa).

4 residues coordinate Zn(2+): His-563, His-567, Cys-665, and His-669.

Belongs to the class-II aminoacyl-tRNA synthetase family. Zn(2+) serves as cofactor.

The protein resides in the cytoplasm. The enzyme catalyses tRNA(Ala) + L-alanine + ATP = L-alanyl-tRNA(Ala) + AMP + diphosphate. In terms of biological role, catalyzes the attachment of alanine to tRNA(Ala) in a two-step reaction: alanine is first activated by ATP to form Ala-AMP and then transferred to the acceptor end of tRNA(Ala). Also edits incorrectly charged Ser-tRNA(Ala) and Gly-tRNA(Ala) via its editing domain. In Desulforudis audaxviator (strain MP104C), this protein is Alanine--tRNA ligase.